The chain runs to 336 residues: E3 ubiquitin-protein ligase RING2 (336 aa).

The segment at 2-179 is interaction with HIP2; it reads TQTVQTNGVQ…AEDNGDSSHC (178 aa). An RING-type zinc finger spans residues 51–91; it reads CPICLDMLKNTMTTKECLHRFCADCIITALRSGNKECPTCR. An interaction with nucleosomes via an acidic patch on histone H2A and histone H2B region spans residues 93–98; that stretch reads KLVSKR. Residues 158 to 218 form a disordered region; the sequence is RGKKHQIENG…NATENGGGDI (61 aa). Residues 176–190 show a composition bias toward polar residues; sequence SSHCSNASVHSNQEA.

As to quaternary structure, component of chromatin-associated Polycomb (PcG) complexes. Component of a PRC1-like complex. Component of some MLL1/MLL complex.

It localises to the nucleus. It is found in the cytoplasm. Its subcellular location is the chromosome. It catalyses the reaction S-ubiquitinyl-[E2 ubiquitin-conjugating enzyme]-L-cysteine + [acceptor protein]-L-lysine = [E2 ubiquitin-conjugating enzyme]-L-cysteine + N(6)-ubiquitinyl-[acceptor protein]-L-lysine.. Its pathway is protein modification; protein ubiquitination. Functionally, E3 ubiquitin-protein ligase that mediates monoubiquitination of 'Lys-119' of histone H2A (H2AK119Ub), thereby playing a central role in histone code and gene regulation. H2AK119Ub gives a specific tag for epigenetic transcriptional repression. Essential component of a Polycomb group (PcG) multiprotein PRC1-like complex, a complex class required to maintain the transcriptionally repressive state of many genes, including Hox genes, throughout development. PcG PRC1 complex acts via chromatin remodeling and modification of histones, rendering chromatin heritably changed in its expressibility. This chain is E3 ubiquitin-protein ligase RING2 (rnf2), found in Danio rerio (Zebrafish).